A 389-amino-acid chain; its full sequence is Alpha-2B adrenergic receptor (389 aa).

The chain crosses the membrane as a helical span at residues 1–25 (AIAAVITFLILFTIFGNALVILAVL). Residues 26–36 (TSRSLRAPQNL) lie on the Cytoplasmic side of the membrane. A helical membrane pass occupies residues 37–62 (FLVSLAAADILVATLIIPFSLANELL). Residues 63 to 72 (GYWYFRRTWC) are Extracellular-facing. Cys72 and Cys151 are joined by a disulfide. Residues 73–95 (EVYLALDVLFCTSSIVHLCAISL) form a helical membrane-spanning segment. Topologically, residues 96 to 117 (DRYWAVTRALEYNTKRTPRRIK) are cytoplasmic. A helical membrane pass occupies residues 118-140 (CIILTVWLIAAVISLPPLIYKGD). The Extracellular segment spans residues 141 to 156 (QGPQPRGRPQCKLNQE). The chain crosses the membrane as a helical span at residues 157-180 (AWYILASSIGSFFAPCLIMILVYL). At 181–363 (RIYLIAKRSH…LTREKRFTFV (183 aa)) the chain is on the cytoplasmic side. Disordered regions lie at residues 194 to 216 (PRAK…AGAS) and 233 to 320 (EANG…PLQQ). Over residues 196–205 (AKGGPGGGGS) the composition is skewed to gly residues. The span at 255-267 (PALPSSWPALPSS) shows a compositional bias: low complexity. Positions 280–302 (LEEEAEEEEEEEEEEEEGEEECE) are enriched in acidic residues. The span at 303–320 (PQALPASPASACSPPLQQ) shows a compositional bias: low complexity. The chain crosses the membrane as a helical span at residues 364-387 (LAVVIGVFVLCWFPFFFSYSLGAI). The Extracellular segment spans residues 388–389 (CP).

Belongs to the G-protein coupled receptor 1 family. Adrenergic receptor subfamily. ADRA2B sub-subfamily. As to quaternary structure, interacts with RAB26. Interacts with PPP1R9B. Interacts with GGA1, GGA2 and GGA3.

It is found in the cell membrane. Alpha-2 adrenergic receptors mediate the catecholamine-induced inhibition of adenylate cyclase through the action of G proteins. In Equus caballus (Horse), this protein is Alpha-2B adrenergic receptor (ADRA2B).